We begin with the raw amino-acid sequence, 123 residues long: Galectin-2 (123 aa).

The Galectin domain maps to 4 to 123 (KVEIMNMDMK…LRYLSVQGGF (120 aa)). 65 to 71 (WGKEQRD) contributes to the a beta-D-galactoside binding site.

As to quaternary structure, homodimer.

This protein binds beta-galactoside. Its physiological function is not yet known. The protein is Galectin-2 (LGALS2) of Sus scrofa (Pig).